Consider the following 540-residue polypeptide: NADH-ubiquinone oxidoreductase chain 4 (540 aa).

Transmembrane regions (helical) follow at residues 2–22 (TIIA…GVIL), 35–55 (IFIL…LIGC), 89–109 (ISAI…LISI), 118–138 (QKFQ…FAAT), 140–160 (LVQL…MIGV), 172–192 (FQIL…IGIL), 218–238 (LIFI…PLHL), 248–268 (PTAG…YGYI), 282–302 (YFPI…IATL), 310–330 (IVAY…FSGV), 338–358 (IILM…IGVI), 376–396 (VMPI…AFPI), 415–435 (IIIA…SFWL), and 501–521 (VNIF…IIGM).

This sequence belongs to the complex I subunit 4 family.

It is found in the mitochondrion membrane. The enzyme catalyses a ubiquinone + NADH + 5 H(+)(in) = a ubiquinol + NAD(+) + 4 H(+)(out). In terms of biological role, core subunit of the mitochondrial membrane respiratory chain NADH dehydrogenase (Complex I) that is believed to belong to the minimal assembly required for catalysis. Complex I functions in the transfer of electrons from NADH to the respiratory chain. The immediate electron acceptor for the enzyme is believed to be ubiquinone. This Dictyostelium discoideum (Social amoeba) protein is NADH-ubiquinone oxidoreductase chain 4 (nad4).